A 96-amino-acid polypeptide reads, in one-letter code: Large ribosomal subunit protein uL23 (96 aa).

Belongs to the universal ribosomal protein uL23 family. Part of the 50S ribosomal subunit. Contacts protein L29, and trigger factor when it is bound to the ribosome.

Functionally, one of the early assembly proteins it binds 23S rRNA. One of the proteins that surrounds the polypeptide exit tunnel on the outside of the ribosome. Forms the main docking site for trigger factor binding to the ribosome. In Ruthia magnifica subsp. Calyptogena magnifica, this protein is Large ribosomal subunit protein uL23.